The chain runs to 85 residues: UPF0473 protein CLK_1946 (85 aa).

This sequence belongs to the UPF0473 family.

This is UPF0473 protein CLK_1946 from Clostridium botulinum (strain Loch Maree / Type A3).